The following is a 977-amino-acid chain: Poly(ADP-ribose) glycohydrolase (977 aa).

Residues 1 to 69 (MSAGPGCEPC…LGRAGQHRGS (69 aa)) form a disordered region. The segment at 1–457 (MSAGPGCEPC…LSPDKKWLGT (457 aa)) is A-domain. Residues 10–16 (CTKRPRW) carry the Nuclear localization signal motif. Residues 17–29 (DAAATSPPAASDA) are compositionally biased toward low complexity. Serine 69 is modified (phosphoserine). A PIP-box (PCNA interacting peptide) motif is present at residues 77–84 (QKTITSWM). 2 positions are modified to phosphoserine: serine 138 and serine 198. The interval 184-407 (SNANVDQSSP…CRNSKQHGRK (224 aa)) is disordered. 2 stretches are compositionally biased toward basic and acidic residues: residues 192-207 (SPKD…ESRD) and 223-234 (TMEDEQGREARS). Residue threonine 200 is modified to Phosphothreonine. Phosphoserine occurs at positions 262, 265, 287, 292, 299, 303, and 317. Positions 280–291 (NRLNRQESSLGN) are enriched in polar residues. The segment covering 317-332 (SEADEETSPGFDEQED) has biased composition (acidic residues). Polar residues predominate over residues 333 to 343 (SSSAQTANKPS). Position 341 is an N6-acetyllysine (lysine 341). Basic and acidic residues predominate over residues 346–356 (QPREADTELRK). Serine 449 is modified (phosphoserine). The segment at 611–796 (QPIPLLKQKM…TEQYSEYTGY (186 aa)) is catalytic. 727–728 (IE) serves as a coordination point for substrate. Aspartate 738 is an active-site residue. Substrate is bound by residues asparagine 741 and glutamine 755. Catalysis depends on residues glutamate 756 and glutamate 757. Residues tyrosine 796 and 870–875 (NWGCGA) contribute to the substrate site.

Belongs to the poly(ADP-ribose) glycohydrolase family. In terms of assembly, interacts with PCNA. Interacts with NUDT5.

The protein resides in the nucleus. It catalyses the reaction [(1''-&gt;2')-ADP-alpha-D-ribose](n) + H2O = [(1''-&gt;2')-ADP-alpha-D-ribose](n-1) + ADP-D-ribose. Poly(ADP-ribose) glycohydrolase that degrades poly(ADP-ribose) by hydrolyzing the ribose-ribose bonds present in poly(ADP-ribose). PARG acts both as an endo- and exoglycosidase, releasing poly(ADP-ribose) of different length as well as ADP-ribose monomers. It is however unable to cleave the ester bond between the terminal ADP-ribose and ADP-ribosylated residues, leaving proteins that are mono-ADP-ribosylated. Poly(ADP-ribose) is synthesized after DNA damage is only present transiently and is rapidly degraded by PARG. Required to prevent detrimental accumulation of poly(ADP-ribose) upon prolonged replicative stress, while it is not required for recovery from transient replicative stress. Responsible for the prevalence of mono-ADP-ribosylated proteins in cells, thanks to its ability to degrade poly(ADP-ribose) without cleaving the terminal protein-ribose bond. Required for retinoid acid-dependent gene transactivation, probably by removing poly(ADP-ribose) from histone demethylase KDM4D, allowing chromatin derepression at RAR-dependent gene promoters. Involved in the synthesis of ATP in the nucleus, together with PARP1, NMNAT1 and NUDT5. Nuclear ATP generation is required for extensive chromatin remodeling events that are energy-consuming. The chain is Poly(ADP-ribose) glycohydrolase from Bos taurus (Bovine).